Reading from the N-terminus, the 129-residue chain is Prefoldin subunit 6 (129 aa).

A2 bears the N-acetylalanine mark. An N6-acetyllysine modification is found at K21. K66 is modified (N6-acetyllysine; alternate). K66 is covalently cross-linked (Glycyl lysine isopeptide (Lys-Gly) (interchain with G-Cter in SUMO1); alternate). K66 is covalently cross-linked (Glycyl lysine isopeptide (Lys-Gly) (interchain with G-Cter in SUMO2); alternate).

It belongs to the prefoldin subunit beta family. Heterohexamer of two PFD-alpha type and four PFD-beta type subunits. Component of the PAQosome complex which is responsible for the biogenesis of several protein complexes and which consists of R2TP complex members RUVBL1, RUVBL2, RPAP3 and PIH1D1, URI complex members PFDN2, PFDN6, PDRG1, UXT and URI1 as well as ASDURF, POLR2E and DNAAF10/WDR92.

Functionally, binds specifically to cytosolic chaperonin (c-CPN) and transfers target proteins to it. Binds to nascent polypeptide chain and promotes folding in an environment in which there are many competing pathways for nonnative proteins. The chain is Prefoldin subunit 6 (PFDN6) from Bos taurus (Bovine).